Consider the following 428-residue polypeptide: Enolase (428 aa).

Q165 is a (2R)-2-phosphoglycerate binding site. The active-site Proton donor is the E207. Mg(2+) is bound by residues D244, E285, and D312. K337, R366, S367, and K388 together coordinate (2R)-2-phosphoglycerate. Catalysis depends on K337, which acts as the Proton acceptor.

The protein belongs to the enolase family. Component of the RNA degradosome, a multiprotein complex involved in RNA processing and mRNA degradation. Mg(2+) serves as cofactor.

The protein localises to the cytoplasm. The protein resides in the secreted. It is found in the cell surface. It catalyses the reaction (2R)-2-phosphoglycerate = phosphoenolpyruvate + H2O. It functions in the pathway carbohydrate degradation; glycolysis; pyruvate from D-glyceraldehyde 3-phosphate: step 4/5. Functionally, catalyzes the reversible conversion of 2-phosphoglycerate (2-PG) into phosphoenolpyruvate (PEP). It is essential for the degradation of carbohydrates via glycolysis. The polypeptide is Enolase (Coxiella burnetii (strain Dugway 5J108-111)).